The following is an 80-amino-acid chain: Small ribosomal subunit protein bS18 (80 aa).

The protein belongs to the bacterial ribosomal protein bS18 family. In terms of assembly, part of the 30S ribosomal subunit. Forms a tight heterodimer with protein bS6.

Binds as a heterodimer with protein bS6 to the central domain of the 16S rRNA, where it helps stabilize the platform of the 30S subunit. In Staphylococcus epidermidis (strain ATCC 35984 / DSM 28319 / BCRC 17069 / CCUG 31568 / BM 3577 / RP62A), this protein is Small ribosomal subunit protein bS18.